Here is a 194-residue protein sequence, read N- to C-terminus: Fe/S biogenesis protein NfuA (194 aa).

Cys-152 and Cys-155 together coordinate [4Fe-4S] cluster.

It belongs to the NfuA family. As to quaternary structure, homodimer. [4Fe-4S] cluster serves as cofactor.

Functionally, involved in iron-sulfur cluster biogenesis. Binds a 4Fe-4S cluster, can transfer this cluster to apoproteins, and thereby intervenes in the maturation of Fe/S proteins. Could also act as a scaffold/chaperone for damaged Fe/S proteins. This is Fe/S biogenesis protein NfuA from Teredinibacter turnerae (strain ATCC 39867 / T7901).